The primary structure comprises 778 residues: Serine/threonine-protein kinase BRSK1 (778 aa).

Positions 1–12 (MSSGSKEGGGGS) are enriched in gly residues. The tract at residues 1 to 29 (MSSGSKEGGGGSPAYHLPHPHPHPPQHAQ) is disordered. Positions 34 to 285 (YRLEKTLGKG…LEQIQKHPWY (252 aa)) constitute a Protein kinase domain. ATP is bound by residues 40 to 48 (LGKGQTGLV) and lysine 63. The Proton acceptor role is filled by aspartate 156. A Phosphothreonine; by LKB1 modification is found at threonine 189. The region spanning 314–356 (ELDPDVLESMASLGCFRDRERLHRELRSEEENQEKMIYYLLLD) is the UBA domain. Residues 362 to 383 (PSCEDQDLPPRNDVDPPRKRVD) are compositionally biased toward basic and acidic residues. Positions 362–548 (PSCEDQDLPP…SPGGGVGGAA (187 aa)) are disordered. Residues serine 399, serine 443, serine 447, and serine 450 each carry the phosphoserine modification. Positions 430–457 (SRSVSGASTGLSSSPLSSPRSPVFSFSP) are enriched in low complexity. Omega-N-methylarginine occurs at positions 466, 481, 484, and 498. A compositionally biased stretch (pro residues) spans 491–508 (QPPPPSARSTPLPGPPGS). Residue serine 508 is modified to Phosphoserine. Over residues 509 to 533 (PRSSGGTPLHSPLHTPRASPTGTPG) the composition is skewed to low complexity. Arginine 525 is modified (omega-N-methylarginine). Residues threonine 529 and threonine 535 each carry the phosphothreonine modification. Position 550 is an omega-N-methylarginine (arginine 550). The segment at 560-588 (FLGSPRFHRRKMQVPTAEEMSSLTPESSP) is disordered. Threonine 583 carries the post-translational modification Phosphothreonine. Serine 586, serine 587, and serine 601 each carry phosphoserine. Residues 719 to 778 (QPSVQALADEKNGAQTRPAGTPPRSLQPPPGRSDPDLSSSPRRGPPKDKKLLATNGTPLP) form a disordered region.

This sequence belongs to the protein kinase superfamily. CAMK Ser/Thr protein kinase family. SNF1 subfamily. The cofactor is Mg(2+). In terms of processing, phosphorylated at Thr-189 by STK11/LKB1 in complex with STE20-related adapter-alpha (STRADA) pseudo kinase and CAB39. Not phosphorylated at Thr-189 by CaMKK2. In contrast, it is phosphorylated and activated by CaMKK1. May be inactivated via dephosphorylation of Thr-189 by PP2C. In terms of tissue distribution, present in the gray matter of the brain and spinal cord (at protein level). Expressed in the nervous system, distributed within the brain and spinal cord of embryonic and postnatal animals.

Its subcellular location is the cytoplasm. The protein localises to the nucleus. It localises to the cytoskeleton. It is found in the microtubule organizing center. The protein resides in the centrosome. Its subcellular location is the synapse. The protein localises to the presynaptic active zone. It localises to the cytoplasmic vesicle. It is found in the secretory vesicle. The protein resides in the synaptic vesicle. It carries out the reaction L-seryl-[protein] + ATP = O-phospho-L-seryl-[protein] + ADP + H(+). The enzyme catalyses L-threonyl-[protein] + ATP = O-phospho-L-threonyl-[protein] + ADP + H(+). The catalysed reaction is L-seryl-[tau protein] + ATP = O-phospho-L-seryl-[tau protein] + ADP + H(+). It catalyses the reaction L-threonyl-[tau protein] + ATP = O-phospho-L-threonyl-[tau protein] + ADP + H(+). Its activity is regulated as follows. Activated by phosphorylation on Thr-189 by STK11/LKB1. Its function is as follows. Serine/threonine-protein kinase that plays a key role in polarization of neurons and centrosome duplication. Phosphorylates CDC25B, CDC25C, MAPT/TAU, RIMS1, TUBG1, TUBG2 and WEE1. Following phosphorylation and activation by STK11/LKB1, acts as a key regulator of polarization of cortical neurons, probably by mediating phosphorylation of microtubule-associated proteins such as MAPT/TAU at 'Thr-504' and 'Ser-554'. Also regulates neuron polarization by mediating phosphorylation of WEE1 at 'Ser-642' in postmitotic neurons, leading to down-regulate WEE1 activity in polarized neurons. In neurons, localizes to synaptic vesicles and plays a role in neurotransmitter release, possibly by phosphorylating RIMS1. Also acts as a positive regulator of centrosome duplication by mediating phosphorylation of gamma-tubulin (TUBG1 and TUBG2) at 'Ser-131', leading to translocation of gamma-tubulin and its associated proteins to the centrosome. Involved in the UV-induced DNA damage checkpoint response, probably by inhibiting CDK1 activity through phosphorylation and activation of WEE1, and inhibition of CDC25B and CDC25C. This is Serine/threonine-protein kinase BRSK1 (Brsk1) from Mus musculus (Mouse).